The following is an 85-amino-acid chain: Putative defensin-like protein 79 (85 aa).

Positions 1-31 (MKSEKSADAYGTYFLLISTIFLLFIARQASS) are cleaved as a signal peptide. 4 cysteine pairs are disulfide-bonded: cysteine 37–cysteine 69, cysteine 44–cysteine 60, cysteine 47–cysteine 67, and cysteine 51–cysteine 68.

Belongs to the DEFL family.

The protein localises to the secreted. This Arabidopsis thaliana (Mouse-ear cress) protein is Putative defensin-like protein 79.